The sequence spans 2077 residues: Large tegument protein deneddylase (2077 aa).

Residues 1–231 (MKIITSSTNQ…PDIAIALDKF (231 aa)) are deubiquitination activity. A Peptidase C76 domain is found at 3-221 (IITSSTNQND…ELLILKTYKD (219 aa)). Catalysis depends on residues cysteine 23, aspartate 156, and histidine 158. Serine 287 is a region of interest (interaction with inner tegument protein). Positions 1982–2004 (PPNNTESTRPGKQTSETLTNKNL) are disordered.

This sequence belongs to the herpesviridae large tegument protein family. Interacts with host CUL1 and CUL4A; these interactions inhibit the E3 ligase activity of cullins. Interacts with inner tegument protein. Interacts with capsid vertex specific component CVC2. Interacts with the major capsid protein/MCP.

It localises to the virion tegument. The protein localises to the host cytoplasm. Its subcellular location is the host nucleus. It catalyses the reaction Thiol-dependent hydrolysis of ester, thioester, amide, peptide and isopeptide bonds formed by the C-terminal Gly of ubiquitin (a 76-residue protein attached to proteins as an intracellular targeting signal).. Its function is as follows. Large tegument protein that plays multiple roles in the viral cycle. During viral entry, remains associated with the capsid while most of the tegument is detached and participates in the capsid transport toward the host nucleus. Plays a role in the routing of the capsid at the nuclear pore complex and subsequent uncoating. Within the host nucleus, acts as a deneddylase and promotes the degradation of nuclear CRLs (cullin-RING ubiquitin ligases) and thereby stabilizes nuclear CRL substrates, while cytoplasmic CRLs remain unaffected. These modifications prevent host cell cycle S-phase progression and create a favorable environment allowing efficient viral genome replication. Participates later in the secondary envelopment of capsids. Indeed, plays a linker role for the association of the outer viral tegument to the capsids together with the inner tegument protein. The sequence is that of Large tegument protein deneddylase (U31) from Homo sapiens (Human).